Consider the following 688-residue polypeptide: Elongation factor G (688 aa).

Positions 8–282 (EKTRNIGIMA…AIIDYLPSPM (275 aa)) constitute a tr-type G domain. Residues 17-24 (AHIDAGKT), 81-85 (DTPGH), and 135-138 (NKMD) each bind GTP.

This sequence belongs to the TRAFAC class translation factor GTPase superfamily. Classic translation factor GTPase family. EF-G/EF-2 subfamily.

It is found in the cytoplasm. In terms of biological role, catalyzes the GTP-dependent ribosomal translocation step during translation elongation. During this step, the ribosome changes from the pre-translocational (PRE) to the post-translocational (POST) state as the newly formed A-site-bound peptidyl-tRNA and P-site-bound deacylated tRNA move to the P and E sites, respectively. Catalyzes the coordinated movement of the two tRNA molecules, the mRNA and conformational changes in the ribosome. This Apple proliferation phytoplasma protein is Elongation factor G (fusA).